A 273-amino-acid chain; its full sequence is Dermonecrotic toxin LdSicTox-alphaIB1avi (273 aa).

His5 is an active-site residue. Residues Glu25 and Asp27 each coordinate Mg(2+). Residue His41 is the Nucleophile of the active site. 2 disulfides stabilise this stretch: Cys45–Cys51 and Cys47–Cys190. Residue Asp85 participates in Mg(2+) binding. N-linked (GlcNAc...) asparagine glycosylation occurs at Asn250.

This sequence belongs to the arthropod phospholipase D family. Class II subfamily. Requires Mg(2+) as cofactor. Expressed by the venom gland.

It localises to the secreted. The enzyme catalyses an N-(acyl)-sphingosylphosphocholine = an N-(acyl)-sphingosyl-1,3-cyclic phosphate + choline. The catalysed reaction is an N-(acyl)-sphingosylphosphoethanolamine = an N-(acyl)-sphingosyl-1,3-cyclic phosphate + ethanolamine. It carries out the reaction a 1-acyl-sn-glycero-3-phosphocholine = a 1-acyl-sn-glycero-2,3-cyclic phosphate + choline. It catalyses the reaction a 1-acyl-sn-glycero-3-phosphoethanolamine = a 1-acyl-sn-glycero-2,3-cyclic phosphate + ethanolamine. In terms of biological role, dermonecrotic toxins cleave the phosphodiester linkage between the phosphate and headgroup of certain phospholipids (sphingolipid and lysolipid substrates), forming an alcohol (often choline) and a cyclic phosphate. This toxin acts on sphingomyelin (SM). It may also act on ceramide phosphoethanolamine (CPE), lysophosphatidylcholine (LPC) and lysophosphatidylethanolamine (LPE), but not on lysophosphatidylserine (LPS), and lysophosphatidylglycerol (LPG). It acts by transphosphatidylation, releasing exclusively cyclic phosphate products as second products. Induces dermonecrosis, hemolysis, increased vascular permeability, edema, inflammatory response, and platelet aggregation. This chain is Dermonecrotic toxin LdSicTox-alphaIB1avi, found in Loxosceles deserta (Desert recluse spider).